Consider the following 249-residue polypeptide: Derlin-2.2 (249 aa).

The Cytoplasmic portion of the chain corresponds to 1–21; the sequence is MAQAVEEWYRQMPIITRSYLT. A helical membrane pass occupies residues 22–42; that stretch reads AAVVTTVGCTLEIISPYHLYL. At 43 to 96 the chain is on the lumenal side; it reads NPKLVVQHYEIWRLVTNFLYFRKMDLDFLFHMFFLARYCKLLEENSFRGRTADF. Residues 97-117 traverse the membrane as a helical segment; that stretch reads FYMLLFGATVLTGIVLIGGMI. At 118-122 the chain is on the cytoplasmic side; the sequence is PYISE. A helical membrane pass occupies residues 123–143; the sequence is TFARILFLSNSLTFMMVYVWS. The Lumenal segment spans residues 144-152; that stretch reads KHNPFIHMS. Residues 153 to 173 form a helical membrane-spanning segment; sequence FLGLFTFTAAYLPWVLLGFSI. Residues 174-249 are Cytoplasmic-facing; it reads LVGSSTWVDL…GAIGVDPQAQ (76 aa).

Belongs to the derlin family. Expressed in roots, stalks, leaves, immature ears, embryo and endosperm.

The protein localises to the endoplasmic reticulum membrane. Functionally, may be involved in the degradation process of specific misfolded endoplasmic reticulum (ER) luminal proteins. The protein is Derlin-2.2 (DER2.2) of Zea mays (Maize).